A 253-amino-acid polypeptide reads, in one-letter code: Tetraspanin-11 (253 aa).

3 helical membrane passes run 19–39 (LLFV…AVGI), 63–83 (ILIF…GAIL), and 93–113 (YFCL…LAHV). N-linked (GlcNAc...) asparagine glycosylation occurs at asparagine 127. A helical membrane pass occupies residues 220–240 (LLLMGAVGIGVACLQICGMVL).

This sequence belongs to the tetraspanin (TM4SF) family.

The protein localises to the membrane. This chain is Tetraspanin-11 (TSPAN11), found in Homo sapiens (Human).